The sequence spans 130 residues: Secreted RxLR effector protein 68 (130 aa).

The signal sequence occupies residues 1-29 (MRCVCASIRRTRIIEFLMFFALSSSTASC). Asparagine 36 is a glycosylation site (N-linked (GlcNAc...) asparagine). Positions 45–48 (RWLR) match the RxLR motif.

The protein belongs to the RxLR effector family.

The protein resides in the secreted. Its subcellular location is the host cytoplasm. The protein localises to the host nucleus. Effector that acts as a broad suppressor of cell death to interrupt plant immunity. Inhibits cell death induced by cell death-inducing proteins, including the PAMP elicitor INF1 from P.infestans. In Plasmopara viticola (Downy mildew of grapevine), this protein is Secreted RxLR effector protein 68.